Reading from the N-terminus, the 659-residue chain is 1,4-alpha-glucan branching enzyme GlgB (659 aa).

Basic and acidic residues predominate over residues 1–12 (MRNCKELKHEKN). Residues 1–25 (MRNCKELKHEKNGNVTEKIGKNKGK) form a disordered region. The Nucleophile role is filled by Asp337. Glu390 serves as the catalytic Proton donor.

It belongs to the glycosyl hydrolase 13 family. GlgB subfamily. Monomer.

It catalyses the reaction Transfers a segment of a (1-&gt;4)-alpha-D-glucan chain to a primary hydroxy group in a similar glucan chain.. It participates in glycan biosynthesis; glycogen biosynthesis. In terms of biological role, catalyzes the formation of the alpha-1,6-glucosidic linkages in glycogen by scission of a 1,4-alpha-linked oligosaccharide from growing alpha-1,4-glucan chains and the subsequent attachment of the oligosaccharide to the alpha-1,6 position. The protein is 1,4-alpha-glucan branching enzyme GlgB of Clostridium perfringens (strain ATCC 13124 / DSM 756 / JCM 1290 / NCIMB 6125 / NCTC 8237 / Type A).